A 126-amino-acid chain; its full sequence is Antimicrobial protein 1 (126 aa).

The first 24 residues, 1–24, serve as a signal peptide directing secretion; sequence MRSSLLLGLTVVLLLGVTVPPCMA.

Strongly expressed in gills, hemocytes and reproductive tract, with weaker expression in muscle, heart and digestive tract. Not detected in eyes and hepatopancreas (at protein level).

The protein localises to the secreted. Functionally, has antibacterial activity against the Gram-positive bacteria E.coli (MIC&lt;50 ug/ml) and P.aeruginosa (MIC&lt;25 ug/ml), and the Gram-negative bacteria S.aureus (MIC&lt;100 ug/ml) and S.pyogenes (MIC&lt;50 ug/ml). This is Antimicrobial protein 1 from Scylla serrata (Mud crab).